The primary structure comprises 98 residues: NADH-ubiquinone oxidoreductase chain 4L (98 aa).

The next 3 helical transmembrane spans lie at 1–21 (MSLI…GLLM), 29–49 (ALLC…LTIL), and 61–81 (IILL…LVMV).

Belongs to the complex I subunit 4L family. In terms of assembly, core subunit of respiratory chain NADH dehydrogenase (Complex I) which is composed of 45 different subunits.

The protein resides in the mitochondrion inner membrane. The catalysed reaction is a ubiquinone + NADH + 5 H(+)(in) = a ubiquinol + NAD(+) + 4 H(+)(out). Functionally, core subunit of the mitochondrial membrane respiratory chain NADH dehydrogenase (Complex I) which catalyzes electron transfer from NADH through the respiratory chain, using ubiquinone as an electron acceptor. Part of the enzyme membrane arm which is embedded in the lipid bilayer and involved in proton translocation. The polypeptide is NADH-ubiquinone oxidoreductase chain 4L (MT-ND4L) (Phocoena phocoena (Harbor porpoise)).